Here is a 471-residue protein sequence, read N- to C-terminus: Glutamate--tRNA ligase (471 aa).

The 'HIGH' region signature appears at 9–19 (PSPTGYLHVGG). Zn(2+)-binding residues include cysteine 98, cysteine 100, cysteine 125, and histidine 127. A 'KMSKS' region motif is present at residues 237–241 (KLSKR). Lysine 240 serves as a coordination point for ATP.

The protein belongs to the class-I aminoacyl-tRNA synthetase family. Glutamate--tRNA ligase type 1 subfamily. As to quaternary structure, monomer. Zn(2+) serves as cofactor.

It is found in the cytoplasm. It carries out the reaction tRNA(Glu) + L-glutamate + ATP = L-glutamyl-tRNA(Glu) + AMP + diphosphate. Its function is as follows. Catalyzes the attachment of glutamate to tRNA(Glu) in a two-step reaction: glutamate is first activated by ATP to form Glu-AMP and then transferred to the acceptor end of tRNA(Glu). This Salmonella schwarzengrund (strain CVM19633) protein is Glutamate--tRNA ligase.